Here is a 131-residue protein sequence, read N- to C-terminus: Fluoride-specific ion channel FluC (131 aa).

Transmembrane regions (helical) follow at residues 10–30, 36–56, 71–91, and 99–119; these read AAVA…SGLV, FPMG…FLTW, LATV…YETV, and VLSI…VLGG. Gly78 and Thr81 together coordinate Na(+).

It belongs to the fluoride channel Fluc/FEX (TC 1.A.43) family.

It is found in the cell membrane. The enzyme catalyses fluoride(in) = fluoride(out). Its activity is regulated as follows. Na(+) is not transported, but it plays an essential structural role and its presence is essential for fluoride channel function. In terms of biological role, fluoride-specific ion channel. Important for reducing fluoride concentration in the cell, thus reducing its toxicity. This chain is Fluoride-specific ion channel FluC, found in Methanopyrus kandleri (strain AV19 / DSM 6324 / JCM 9639 / NBRC 100938).